A 1881-amino-acid polypeptide reads, in one-letter code: Endoribonuclease Dicer-S (1881 aa).

The region spanning 41–217 (LLEAALDHNI…DLEEKIQNLE (177 aa)) is the Helicase ATP-binding domain. 54–61 (LNSGSGKT) provides a ligand contact to ATP. Positions 165 to 168 (DECH) match the DECH box motif. In terms of domain architecture, Helicase C-terminal spans 425-594 (SFPSPFTNIL…SMDCGNTESE (170 aa)). The Dicer dsRNA-binding fold domain maps to 622–714 (AIGHINRYCA…MPVGKETVKY (93 aa)). A PAZ domain is found at 887-1034 (KFVEDIEKSE…LVPELCAIHP (148 aa)). 2 consecutive RNase III domains span residues 1249 to 1380 (TSDI…ETSG) and 1625 to 1783 (FENF…MDSG). The Mg(2+) site is built by Glu-1293, Asp-1371, Glu-1374, Glu-1664, Asp-1769, and Glu-1772. One can recognise a DRBM domain in the interval 1808-1873 (VPRSPVRELL…ARRALRSLKA (66 aa)).

This sequence belongs to the helicase family. Dicer subfamily. In terms of assembly, component of the RISC loading complex (RLC), or micro-RNA (miRNA) loading complex (miRLC), which is composed of dicer1, ago2 and tarbp2; dicer1 and tarbp2 are required to process precursor miRNAs (pre-miRNAs) to mature miRNAs and then load them onto ago2. Note that the trimeric RLC/miRLC is also referred to as RISC. Mg(2+) serves as cofactor. The cofactor is Mn(2+).

It localises to the cytoplasm. It carries out the reaction Endonucleolytic cleavage to 5'-phosphomonoester.. Its function is as follows. Double-stranded RNA (dsRNA) endoribonuclease playing a central role in short dsRNA-mediated post-transcriptional gene silencing. Cleaves naturally occurring long dsRNAs and short hairpin pre-microRNAs (miRNA) into fragments of twenty-one to twenty-three nucleotides with 3' overhang of two nucleotides, producing respectively short interfering RNAs (siRNA) and mature microRNAs. SiRNAs and miRNAs serve as guide to direct the RNA-induced silencing complex (RISC) to complementary RNAs to degrade them or prevent their translation. Gene silencing mediated by siRNAs, also called RNA interference, controls the elimination of transcripts from mobile and repetitive DNA elements of the genome but also the degradation of exogenous RNA of viral origin for instance. The miRNA pathway on the other side is a mean to specifically regulate the expression of target genes. During embryonic development, at the left-right organizer, post-transcriptionally regulates the expression of dand5 in flow sensor cells. In post-flow stages, acts along with Bicc1 to repress dand5 mRNA translation and decay. Decreased Dand5 expression lifts repression of Nodal and defines leftness by induction of the lateral plate mesoderm Nodal signaling cascade. This chain is Endoribonuclease Dicer-S (dicer1.S), found in Xenopus laevis (African clawed frog).